Consider the following 573-residue polypeptide: Probable D-xylulose kinase A (573 aa).

Substrate-binding residues include histidine 97, arginine 168, aspartate 284, and asparagine 285. Residues tryptophan 366, 471-472 (GG), and asparagine 475 contribute to the ATP site.

It belongs to the FGGY kinase family.

It is found in the cytoplasm. The catalysed reaction is D-xylulose + ATP = D-xylulose 5-phosphate + ADP + H(+). Highly specific D-xylulose kinase which participates in the catabolism of xylose. Xylose is a major component of hemicelluloses such as xylan. Most fungi utilize D-xylose via three enzymatic reactions, xylose reductase (XR), xylitol dehydrogenase (XDH), and xylulokinase, to form xylulose 5-phosphate, which enters pentose phosphate pathway. This chain is Probable D-xylulose kinase A (xkiA), found in Aspergillus fumigatus (strain ATCC MYA-4609 / CBS 101355 / FGSC A1100 / Af293) (Neosartorya fumigata).